Reading from the N-terminus, the 219-residue chain is Deoxyribose-phosphate aldolase (219 aa).

Asp-89 (proton donor/acceptor) is an active-site residue. Lys-151 acts as the Schiff-base intermediate with acetaldehyde in catalysis. The Proton donor/acceptor role is filled by Lys-180.

Belongs to the DeoC/FbaB aldolase family. DeoC type 1 subfamily.

Its subcellular location is the cytoplasm. The catalysed reaction is 2-deoxy-D-ribose 5-phosphate = D-glyceraldehyde 3-phosphate + acetaldehyde. It functions in the pathway carbohydrate degradation; 2-deoxy-D-ribose 1-phosphate degradation; D-glyceraldehyde 3-phosphate and acetaldehyde from 2-deoxy-alpha-D-ribose 1-phosphate: step 2/2. In terms of biological role, catalyzes a reversible aldol reaction between acetaldehyde and D-glyceraldehyde 3-phosphate to generate 2-deoxy-D-ribose 5-phosphate. The chain is Deoxyribose-phosphate aldolase from Coprothermobacter proteolyticus (strain ATCC 35245 / DSM 5265 / OCM 4 / BT).